The chain runs to 87 residues: Small ribosomal subunit protein uS17 (87 aa).

Belongs to the universal ribosomal protein uS17 family. Part of the 30S ribosomal subunit.

Functionally, one of the primary rRNA binding proteins, it binds specifically to the 5'-end of 16S ribosomal RNA. This chain is Small ribosomal subunit protein uS17, found in Exiguobacterium sibiricum (strain DSM 17290 / CCUG 55495 / CIP 109462 / JCM 13490 / 255-15).